A 319-amino-acid chain; its full sequence is Lipoyl synthase (319 aa).

A disordered region spans residues 1-29 (MVVVVDTVSDKPIRPRHPEKAARPDALSP). A compositionally biased stretch (basic and acidic residues) spans 8–29 (VSDKPIRPRHPEKAARPDALSP). Residues cysteine 61, cysteine 66, cysteine 72, cysteine 87, cysteine 91, cysteine 94, and serine 300 each contribute to the [4Fe-4S] cluster site. Residues 73-289 (WDRKHATFMI…ESLAYAKGFL (217 aa)) form the Radical SAM core domain.

This sequence belongs to the radical SAM superfamily. Lipoyl synthase family. The cofactor is [4Fe-4S] cluster.

The protein localises to the cytoplasm. It carries out the reaction [[Fe-S] cluster scaffold protein carrying a second [4Fe-4S](2+) cluster] + N(6)-octanoyl-L-lysyl-[protein] + 2 oxidized [2Fe-2S]-[ferredoxin] + 2 S-adenosyl-L-methionine + 4 H(+) = [[Fe-S] cluster scaffold protein] + N(6)-[(R)-dihydrolipoyl]-L-lysyl-[protein] + 4 Fe(3+) + 2 hydrogen sulfide + 2 5'-deoxyadenosine + 2 L-methionine + 2 reduced [2Fe-2S]-[ferredoxin]. It functions in the pathway protein modification; protein lipoylation via endogenous pathway; protein N(6)-(lipoyl)lysine from octanoyl-[acyl-carrier-protein]: step 2/2. Catalyzes the radical-mediated insertion of two sulfur atoms into the C-6 and C-8 positions of the octanoyl moiety bound to the lipoyl domains of lipoate-dependent enzymes, thereby converting the octanoylated domains into lipoylated derivatives. The polypeptide is Lipoyl synthase (Rhodopseudomonas palustris (strain BisA53)).